Here is a 262-residue protein sequence, read N- to C-terminus: GTP cyclohydrolase FolE2 (262 aa).

It belongs to the GTP cyclohydrolase IV family.

The enzyme catalyses GTP + H2O = 7,8-dihydroneopterin 3'-triphosphate + formate + H(+). It participates in cofactor biosynthesis; 7,8-dihydroneopterin triphosphate biosynthesis; 7,8-dihydroneopterin triphosphate from GTP: step 1/1. In terms of biological role, converts GTP to 7,8-dihydroneopterin triphosphate. The protein is GTP cyclohydrolase FolE2 of Dichelobacter nodosus (strain VCS1703A).